The chain runs to 447 residues: Dihydroorotase (447 aa).

The Zn(2+) site is built by His84 and His86. Residues 86-88 (HLR) and Asn118 contribute to the substrate site. Asp174, His201, and His255 together coordinate Zn(2+). Asn301 contacts substrate. Asp328 provides a ligand contact to Zn(2+). The active site involves Asp328. Substrate-binding positions include His332 and 346–347 (FG).

The protein belongs to the metallo-dependent hydrolases superfamily. DHOase family. Class I DHOase subfamily. It depends on Zn(2+) as a cofactor.

It catalyses the reaction (S)-dihydroorotate + H2O = N-carbamoyl-L-aspartate + H(+). The protein operates within pyrimidine metabolism; UMP biosynthesis via de novo pathway; (S)-dihydroorotate from bicarbonate: step 3/3. Functionally, catalyzes the reversible cyclization of carbamoyl aspartate to dihydroorotate. This chain is Dihydroorotase, found in Anaplasma phagocytophilum (strain HZ).